Here is a 75-residue protein sequence, read N- to C-terminus: UPF0352 protein YejL (75 aa).

The protein belongs to the UPF0352 family.

The protein is UPF0352 protein YejL of Shigella dysenteriae serotype 1 (strain Sd197).